The chain runs to 558 residues: Formate--tetrahydrofolate ligase (558 aa).

65 to 72 contributes to the ATP binding site; sequence TPAGEGKT.

The protein belongs to the formate--tetrahydrofolate ligase family.

The enzyme catalyses (6S)-5,6,7,8-tetrahydrofolate + formate + ATP = (6R)-10-formyltetrahydrofolate + ADP + phosphate. Its pathway is one-carbon metabolism; tetrahydrofolate interconversion. This is Formate--tetrahydrofolate ligase from Methylobacterium nodulans (strain LMG 21967 / CNCM I-2342 / ORS 2060).